Here is a 138-residue protein sequence, read N- to C-terminus: Large ribosomal subunit protein eL14A (138 aa).

Position 2 is an N-acetylserine (serine 2).

Belongs to the eukaryotic ribosomal protein eL14 family. Component of the large ribosomal subunit (LSU). Mature yeast ribosomes consist of a small (40S) and a large (60S) subunit. The 40S small subunit contains 1 molecule of ribosomal RNA (18S rRNA) and 33 different proteins (encoded by 57 genes). The large 60S subunit contains 3 rRNA molecules (25S, 5.8S and 5S rRNA) and 46 different proteins (encoded by 81 genes). N-terminally acetylated by acetyltransferase NatA.

It localises to the cytoplasm. Its function is as follows. Component of the ribosome, a large ribonucleoprotein complex responsible for the synthesis of proteins in the cell. The small ribosomal subunit (SSU) binds messenger RNAs (mRNAs) and translates the encoded message by selecting cognate aminoacyl-transfer RNA (tRNA) molecules. The large subunit (LSU) contains the ribosomal catalytic site termed the peptidyl transferase center (PTC), which catalyzes the formation of peptide bonds, thereby polymerizing the amino acids delivered by tRNAs into a polypeptide chain. The nascent polypeptides leave the ribosome through a tunnel in the LSU and interact with protein factors that function in enzymatic processing, targeting, and the membrane insertion of nascent chains at the exit of the ribosomal tunnel. In Saccharomyces cerevisiae (strain ATCC 204508 / S288c) (Baker's yeast), this protein is Large ribosomal subunit protein eL14A.